The following is a 585-amino-acid chain: ATP-dependent lipid A-core flippase (585 aa).

Transmembrane regions (helical) follow at residues 24–44 (LWKV…ASAA), 65–85 (LLVP…SFCG), 143–163 (ITVV…MIYV), 165–185 (WKLT…IGYV), and 253–273 (PIIQ…ALSP). The region spanning 29–310 (ALAVLGNVIY…LTEVNAVIQR (282 aa)) is the ABC transmembrane type-1 domain. The region spanning 342–578 (LEFKSLGFAY…DGAYAALHKL (237 aa)) is the ABC transporter domain. 376-383 (GRSGSGKS) provides a ligand contact to ATP.

The protein belongs to the ABC transporter superfamily. Lipid exporter (TC 3.A.1.106) family. As to quaternary structure, homodimer.

It localises to the cell inner membrane. It carries out the reaction ATP + H2O + lipid A-core oligosaccharideSide 1 = ADP + phosphate + lipid A-core oligosaccharideSide 2.. Involved in lipopolysaccharide (LPS) biosynthesis. Translocates lipid A-core from the inner to the outer leaflet of the inner membrane. Transmembrane domains (TMD) form a pore in the inner membrane and the ATP-binding domain (NBD) is responsible for energy generation. In Hahella chejuensis (strain KCTC 2396), this protein is ATP-dependent lipid A-core flippase.